A 221-amino-acid chain; its full sequence is Uracil-DNA glycosylase (221 aa).

Asp65 (proton acceptor) is an active-site residue.

It belongs to the uracil-DNA glycosylase (UDG) superfamily. UNG family.

It is found in the cytoplasm. The enzyme catalyses Hydrolyzes single-stranded DNA or mismatched double-stranded DNA and polynucleotides, releasing free uracil.. In terms of biological role, excises uracil residues from the DNA which can arise as a result of misincorporation of dUMP residues by DNA polymerase or due to deamination of cytosine. This Flavobacterium johnsoniae (strain ATCC 17061 / DSM 2064 / JCM 8514 / BCRC 14874 / CCUG 350202 / NBRC 14942 / NCIMB 11054 / UW101) (Cytophaga johnsonae) protein is Uracil-DNA glycosylase.